Reading from the N-terminus, the 185-residue chain is UPF0397 protein lhv_0999 (185 aa).

5 consecutive transmembrane segments (helical) span residues V11–P31, F45–G65, I72–I92, I111–P131, and V145–T165.

It belongs to the UPF0397 family.

It is found in the cell membrane. This is UPF0397 protein lhv_0999 from Lactobacillus helveticus (strain DPC 4571).